The primary structure comprises 320 residues: Porphobilinogen deaminase (320 aa).

Cys251 carries the post-translational modification S-(dipyrrolylmethanemethyl)cysteine.

Belongs to the HMBS family. As to quaternary structure, monomer. Dipyrromethane is required as a cofactor.

It carries out the reaction 4 porphobilinogen + H2O = hydroxymethylbilane + 4 NH4(+). The protein operates within porphyrin-containing compound metabolism; protoporphyrin-IX biosynthesis; coproporphyrinogen-III from 5-aminolevulinate: step 2/4. Functionally, tetrapolymerization of the monopyrrole PBG into the hydroxymethylbilane pre-uroporphyrinogen in several discrete steps. This chain is Porphobilinogen deaminase, found in Phenylobacterium zucineum (strain HLK1).